Here is a 343-residue protein sequence, read N- to C-terminus: General transcription and DNA repair factor IIH subunit TFB6 (343 aa).

Y69 is subject to Phosphotyrosine. T71 and T84 each carry phosphothreonine. S104, S105, S108, and S342 each carry phosphoserine.

As to quaternary structure, component of the general transcription factor TFIIH, composed of a 7-subunit TFIIH core complex composed of XPB/SSL2, XPD/RAD3, SSL1, TFB1, TFB2, TFB4 and TFB5 which is active in NER; the 3-subunit CTD-kinase module TFIIK composed of CCL1, KIN28, and TFB3 which is active in transcription; as well as TFB6 that regulates SSL2 association with the complex. Phosphorylation leads the dissociation of from SSL2.

Its subcellular location is the cytoplasm. The protein resides in the nucleus. In terms of biological role, component of the general transcription and DNA repair factor IIH (TFIIH) core complex, which is involved in general and transcription-coupled nucleotide excision repair (NER) of damaged DNA and, when complexed to TFIIK, in RNA transcription by RNA polymerase II. In NER, TFIIH acts by opening DNA around the lesion to allow the excision of the damaged oligonucleotide and its replacement by a new DNA fragment. In transcription, TFIIH has an essential role in transcription initiation. When the pre-initiation complex (PIC) has been established, TFIIH is required for promoter opening and promoter escape. Phosphorylation of the C-terminal tail (CTD) of the largest subunit of RNA polymerase II by the kinase module TFIIK controls the initiation of transcription. TFB6 facilitates dissociation of the SSL2 helicase from TFIIH after transcription initiation. The chain is General transcription and DNA repair factor IIH subunit TFB6 from Saccharomyces cerevisiae (strain ATCC 204508 / S288c) (Baker's yeast).